A 189-amino-acid polypeptide reads, in one-letter code: Protein GrpE (189 aa).

A compositionally biased stretch (basic and acidic residues) spans 1–38 (MTKSNETERMEESEETHSSDIRSASESDHASGSDHTES). The segment at 1–54 (MTKSNETERMEESEETHSSDIRSASESDHASGSDHTESADEIPTADAEQGELEQ) is disordered.

The protein belongs to the GrpE family. Homodimer.

The protein resides in the cytoplasm. In terms of biological role, participates actively in the response to hyperosmotic and heat shock by preventing the aggregation of stress-denatured proteins, in association with DnaK and GrpE. It is the nucleotide exchange factor for DnaK and may function as a thermosensor. Unfolded proteins bind initially to DnaJ; upon interaction with the DnaJ-bound protein, DnaK hydrolyzes its bound ATP, resulting in the formation of a stable complex. GrpE releases ADP from DnaK; ATP binding to DnaK triggers the release of the substrate protein, thus completing the reaction cycle. Several rounds of ATP-dependent interactions between DnaJ, DnaK and GrpE are required for fully efficient folding. The chain is Protein GrpE from Tropheryma whipplei (strain TW08/27) (Whipple's bacillus).